A 420-amino-acid chain; its full sequence is Glutamyl-tRNA reductase (420 aa).

Substrate contacts are provided by residues 49 to 52 (TCNR), Ser109, 114 to 116 (EPQ), and Gln120. The active-site Nucleophile is Cys50. Residue 189-194 (GAGETI) participates in NADP(+) binding.

The protein belongs to the glutamyl-tRNA reductase family. In terms of assembly, homodimer.

It catalyses the reaction (S)-4-amino-5-oxopentanoate + tRNA(Glu) + NADP(+) = L-glutamyl-tRNA(Glu) + NADPH + H(+). It functions in the pathway porphyrin-containing compound metabolism; protoporphyrin-IX biosynthesis; 5-aminolevulinate from L-glutamyl-tRNA(Glu): step 1/2. In terms of biological role, catalyzes the NADPH-dependent reduction of glutamyl-tRNA(Glu) to glutamate 1-semialdehyde (GSA). In Proteus mirabilis (strain HI4320), this protein is Glutamyl-tRNA reductase.